Here is a 257-residue protein sequence, read N- to C-terminus: Tryptophan synthase alpha chain (257 aa).

Catalysis depends on proton acceptor residues E47 and D58.

The protein belongs to the TrpA family. As to quaternary structure, tetramer of two alpha and two beta chains.

The enzyme catalyses (1S,2R)-1-C-(indol-3-yl)glycerol 3-phosphate + L-serine = D-glyceraldehyde 3-phosphate + L-tryptophan + H2O. The protein operates within amino-acid biosynthesis; L-tryptophan biosynthesis; L-tryptophan from chorismate: step 5/5. Functionally, the alpha subunit is responsible for the aldol cleavage of indoleglycerol phosphate to indole and glyceraldehyde 3-phosphate. The protein is Tryptophan synthase alpha chain of Listeria welshimeri serovar 6b (strain ATCC 35897 / DSM 20650 / CCUG 15529 / CIP 8149 / NCTC 11857 / SLCC 5334 / V8).